Consider the following 307-residue polypeptide: N-acetylmuramic acid 6-phosphate etherase (307 aa).

An SIS domain is found at Thr59–Lys222. Glu87 serves as the catalytic Proton donor. Glu118 is an active-site residue.

The protein belongs to the GCKR-like family. MurNAc-6-P etherase subfamily. In terms of assembly, homodimer.

It catalyses the reaction N-acetyl-D-muramate 6-phosphate + H2O = N-acetyl-D-glucosamine 6-phosphate + (R)-lactate. The protein operates within amino-sugar metabolism; N-acetylmuramate degradation. In terms of biological role, specifically catalyzes the cleavage of the D-lactyl ether substituent of MurNAc 6-phosphate, producing GlcNAc 6-phosphate and D-lactate. The chain is N-acetylmuramic acid 6-phosphate etherase from Nostoc sp. (strain PCC 7120 / SAG 25.82 / UTEX 2576).